The chain runs to 207 residues: Large ribosomal subunit protein uL4 (207 aa).

The disordered stretch occupies residues 49-78 (HAVKNRSAVSGGGRKPWRQKGTGRARQGSI).

It belongs to the universal ribosomal protein uL4 family. In terms of assembly, part of the 50S ribosomal subunit.

One of the primary rRNA binding proteins, this protein initially binds near the 5'-end of the 23S rRNA. It is important during the early stages of 50S assembly. It makes multiple contacts with different domains of the 23S rRNA in the assembled 50S subunit and ribosome. Its function is as follows. Forms part of the polypeptide exit tunnel. This is Large ribosomal subunit protein uL4 from Streptococcus pneumoniae serotype 2 (strain D39 / NCTC 7466).